The following is a 386-amino-acid chain: Patatin-07 (386 aa).

Residues 1-23 (MATTKSFLILFFMILATTSSTCA) form the signal peptide. The PNPLA domain maps to 32–229 (LSIDGGGIKG…TVADPALLSV (198 aa)). A GXGXXG motif is present at residues 36–41 (GGGIKG). Positions 75-79 (GTSTG) match the GXSXG motif. The Nucleophile role is filled by Ser-77. 2 N-linked (GlcNAc...) asparagine glycosylation sites follow: Asn-115 and Asn-202. Residue Asp-215 is the Proton acceptor of the active site. The DGA/G motif lies at 215–217 (DGA).

This sequence belongs to the patatin family. Tuber.

It localises to the vacuole. Probable lipolytic acyl hydrolase (LAH), an activity which is thought to be involved in the response of tubers to pathogens. This chain is Patatin-07, found in Solanum tuberosum (Potato).